The primary structure comprises 1533 residues: Glycogen debranching enzyme (1533 aa).

Ser-64 bears the Phosphoserine mark. Catalysis depends on residues Asp-527, His-530, and Asp-628.

The protein belongs to the glycogen debranching enzyme family. In terms of assembly, monomer. Interacts with NHLRC1/malin. In terms of processing, ubiquitinated.

The protein resides in the cytoplasm. It carries out the reaction Transfers a segment of a (1-&gt;4)-alpha-D-glucan to a new position in an acceptor, which may be glucose or a (1-&gt;4)-alpha-D-glucan.. The catalysed reaction is Hydrolysis of (1-&gt;6)-alpha-D-glucosidic branch linkages in glycogen phosphorylase limit dextrin.. In terms of biological role, multifunctional enzyme acting as 1,4-alpha-D-glucan:1,4-alpha-D-glucan 4-alpha-D-glycosyltransferase and amylo-1,6-glucosidase in glycogen degradation. This Canis lupus familiaris (Dog) protein is Glycogen debranching enzyme (AGL).